We begin with the raw amino-acid sequence, 147 residues long: Biogenesis of lysosome-related organelles complex 1 subunit 1 (147 aa).

2 disordered regions span residues 1–25 and 125–147; these read MLTS…VRRK and SSGA…PSAT.

This sequence belongs to the BLOC1S1 family. Component of the biogenesis of lysosome-related organelles complex-1 (BLOC-1) composed of Blos1, Blos2, Blos3, Blos4, Dysb, Muted, Pldn and Snapin. Interacts with Pldn.

In terms of biological role, component of the biogenesis of lysosome-related organelles complex-1 (BLOC-1) involved in pigment granule biogenesis and membrane trafficking in synapses. In response to high synaptic activity at neuromuscular junctions, stabilizes Pldn protein levels and, together with Pldn, plays a role in promoting efficient synaptic vesicle recycling and re-formation through early endosomes. The sequence is that of Biogenesis of lysosome-related organelles complex 1 subunit 1 from Drosophila melanogaster (Fruit fly).